The sequence spans 513 residues: ATP synthase subunit alpha (513 aa).

G169 to T176 contributes to the ATP binding site.

It belongs to the ATPase alpha/beta chains family. As to quaternary structure, F-type ATPases have 2 components, CF(1) - the catalytic core - and CF(0) - the membrane proton channel. CF(1) has five subunits: alpha(3), beta(3), gamma(1), delta(1), epsilon(1). CF(0) has three main subunits: a(1), b(2) and c(9-12). The alpha and beta chains form an alternating ring which encloses part of the gamma chain. CF(1) is attached to CF(0) by a central stalk formed by the gamma and epsilon chains, while a peripheral stalk is formed by the delta and b chains.

It is found in the cell inner membrane. The catalysed reaction is ATP + H2O + 4 H(+)(in) = ADP + phosphate + 5 H(+)(out). Produces ATP from ADP in the presence of a proton gradient across the membrane. The alpha chain is a regulatory subunit. In Burkholderia cenocepacia (strain ATCC BAA-245 / DSM 16553 / LMG 16656 / NCTC 13227 / J2315 / CF5610) (Burkholderia cepacia (strain J2315)), this protein is ATP synthase subunit alpha.